The sequence spans 408 residues: MSRYVFTSESVTEGHPDKICDQVSDAVLDALLAQDPASRVACETVVNTGLCMITGEVTSKAKVDFIHLVRDVIKEIGYSGARAGGFDANSCAVLVALDQQSPDIAQGVNEADDHAGDPLDLVGAGDQGIMFGYACNETPELMPLPISLAHRLARQLAEVRHNGTLDYLLPDGKTQVSVVYENDQPVAIDTILISTQHTAEVGGMSDEQGIRERITEDLWTHVVEPATADLNLKPSREGTKYLVNPTGKFVVGGPQGDAGLTGRKIIVDTYGGYARHGGGAFSGKDPTKVDRSAAYAARFVAKALVASGLAGRAEVQLSYAIGVAKPVSILVESFGTGTVSNEDLTALVQEHFDLRPGAIIENFGLRNLPQARGGRFYQNTAAYGHFGRNDLNLPWEDVAAKAEELRKA.

Residue His15 coordinates ATP. Position 17 (Asp17) interacts with Mg(2+). Position 43 (Glu43) interacts with K(+). L-methionine-binding residues include Glu56 and Gln100. The interval 100–110 is flexible loop; the sequence is QSPDIAQGVNE. Residues 171–173, 248–249, Asp257, 263–264, Ala280, and Lys284 contribute to the ATP site; these read DGK, KF, and RK. Asp257 provides a ligand contact to L-methionine. An L-methionine-binding site is contributed by Lys288.

It belongs to the AdoMet synthase family. As to quaternary structure, homotetramer; dimer of dimers. Mg(2+) serves as cofactor. It depends on K(+) as a cofactor.

The protein resides in the cytoplasm. The enzyme catalyses L-methionine + ATP + H2O = S-adenosyl-L-methionine + phosphate + diphosphate. It participates in amino-acid biosynthesis; S-adenosyl-L-methionine biosynthesis; S-adenosyl-L-methionine from L-methionine: step 1/1. Its function is as follows. Catalyzes the formation of S-adenosylmethionine (AdoMet) from methionine and ATP. The overall synthetic reaction is composed of two sequential steps, AdoMet formation and the subsequent tripolyphosphate hydrolysis which occurs prior to release of AdoMet from the enzyme. This chain is S-adenosylmethionine synthase, found in Synechococcus sp. (strain CC9902).